A 968-amino-acid chain; its full sequence is RNA polymerase-associated protein RapA (968 aa).

Residues 163 to 332 (EVGSRYAPRV…FARLRLLDPD (170 aa)) enclose the Helicase ATP-binding domain. Residue 176–183 (DEVGLGKT) coordinates ATP. The short motif at 278 to 281 (DEAH) is the DEAH box element. In terms of domain architecture, Helicase C-terminal spans 491–655 (RVDWLIEFLK…EFADELINVL (165 aa)).

The protein belongs to the SNF2/RAD54 helicase family. RapA subfamily. Interacts with the RNAP. Has a higher affinity for the core RNAP than for the holoenzyme. Its ATPase activity is stimulated by binding to RNAP.

In terms of biological role, transcription regulator that activates transcription by stimulating RNA polymerase (RNAP) recycling in case of stress conditions such as supercoiled DNA or high salt concentrations. Probably acts by releasing the RNAP, when it is trapped or immobilized on tightly supercoiled DNA. Does not activate transcription on linear DNA. Probably not involved in DNA repair. This is RNA polymerase-associated protein RapA from Shewanella frigidimarina (strain NCIMB 400).